The primary structure comprises 848 residues: Adenylate cyclase (848 aa).

The interval Met1–Leu535 is catalytic. Residues Lys541–Ser848 are regulatory. Position 609 is a phosphohistidine; by CRR (His609).

It belongs to the adenylyl cyclase class-1 family.

The protein localises to the cytoplasm. It carries out the reaction ATP = 3',5'-cyclic AMP + diphosphate. This chain is Adenylate cyclase (cyaA), found in Shigella flexneri.